We begin with the raw amino-acid sequence, 100 residues long: Small ribosomal subunit protein uS14c (100 aa).

Belongs to the universal ribosomal protein uS14 family. In terms of assembly, part of the 30S ribosomal subunit.

Its subcellular location is the plastid. The protein localises to the chloroplast. In terms of biological role, binds 16S rRNA, required for the assembly of 30S particles. The sequence is that of Small ribosomal subunit protein uS14c from Olimarabidopsis pumila (Dwarf rocket).